We begin with the raw amino-acid sequence, 157 residues long: Cyclic pyranopterin monophosphate synthase (157 aa).

Substrate is bound by residues 74 to 76 (MCH) and 112 to 113 (ME). Asp127 is a catalytic residue.

Belongs to the MoaC family. Homohexamer; trimer of dimers.

The catalysed reaction is (8S)-3',8-cyclo-7,8-dihydroguanosine 5'-triphosphate = cyclic pyranopterin phosphate + diphosphate. It participates in cofactor biosynthesis; molybdopterin biosynthesis. Catalyzes the conversion of (8S)-3',8-cyclo-7,8-dihydroguanosine 5'-triphosphate to cyclic pyranopterin monophosphate (cPMP). This Campylobacter jejuni subsp. jejuni serotype O:6 (strain 81116 / NCTC 11828) protein is Cyclic pyranopterin monophosphate synthase.